The chain runs to 285 residues: Proteasome subunit beta (285 aa).

The propeptide at 1-50 is removed in mature form; by autocatalysis; that stretch reads MTAEHPARLPQAFMTPGSSSFVDFLAAHDPSLLPSSRALPAGSAPPAPHG. Residue threonine 51 is the Nucleophile of the active site. Residues 266-285 form a disordered region; the sequence is RTRQARSSRSRHGSLGGDLR.

This sequence belongs to the peptidase T1B family. The 20S proteasome core is composed of 14 alpha and 14 beta subunits that assemble into four stacked heptameric rings, resulting in a barrel-shaped structure. The two inner rings, each composed of seven catalytic beta subunits, are sandwiched by two outer rings, each composed of seven alpha subunits. The catalytic chamber with the active sites is on the inside of the barrel. Has a gated structure, the ends of the cylinder being occluded by the N-termini of the alpha-subunits. Is capped by the proteasome-associated ATPase, ARC.

It localises to the cytoplasm. The catalysed reaction is Cleavage of peptide bonds with very broad specificity.. The protein operates within protein degradation; proteasomal Pup-dependent pathway. With respect to regulation, the formation of the proteasomal ATPase ARC-20S proteasome complex, likely via the docking of the C-termini of ARC into the intersubunit pockets in the alpha-rings, may trigger opening of the gate for substrate entry. Interconversion between the open-gate and close-gate conformations leads to a dynamic regulation of the 20S proteasome proteolysis activity. In terms of biological role, component of the proteasome core, a large protease complex with broad specificity involved in protein degradation. This is Proteasome subunit beta from Sanguibacter keddieii (strain ATCC 51767 / DSM 10542 / NCFB 3025 / ST-74).